A 349-amino-acid chain; its full sequence is 5-deoxyribose 1-phosphate isomerase (349 aa).

Substrate-binding positions include 49–51 (RGA), arginine 92, and glutamine 199. The active-site Proton donor is the aspartate 240. 250 to 251 (NK) is a substrate binding site.

It belongs to the EIF-2B alpha/beta/delta subunits family. DrdI subfamily.

The enzyme catalyses 5-deoxy-alpha-D-ribose 1-phosphate = 5-deoxy-D-ribulose 1-phosphate. It functions in the pathway carbohydrate degradation. Its function is as follows. Catalyzes the isomerization of 5-deoxy-alpha-D-ribose 1-phosphate to 5-deoxy-D-ribulose 1-phosphate, as part of a 5-deoxyribose salvage pathway that recycles this toxic radical SAM enzyme by-product to mainstream metabolites. This chain is 5-deoxyribose 1-phosphate isomerase, found in Clostridium botulinum (strain ATCC 19397 / Type A).